The following is an 85-amino-acid chain: Exodeoxyribonuclease 7 small subunit (85 aa).

This sequence belongs to the XseB family. In terms of assembly, heterooligomer composed of large and small subunits.

Its subcellular location is the cytoplasm. It catalyses the reaction Exonucleolytic cleavage in either 5'- to 3'- or 3'- to 5'-direction to yield nucleoside 5'-phosphates.. Its function is as follows. Bidirectionally degrades single-stranded DNA into large acid-insoluble oligonucleotides, which are then degraded further into small acid-soluble oligonucleotides. The chain is Exodeoxyribonuclease 7 small subunit from Mycobacterium bovis (strain ATCC BAA-935 / AF2122/97).